We begin with the raw amino-acid sequence, 315 residues long: Transaldolase (315 aa).

The active-site Schiff-base intermediate with substrate is K125.

Belongs to the transaldolase family. Type 1 subfamily. As to quaternary structure, homodimer.

It localises to the cytoplasm. The enzyme catalyses D-sedoheptulose 7-phosphate + D-glyceraldehyde 3-phosphate = D-erythrose 4-phosphate + beta-D-fructose 6-phosphate. It functions in the pathway carbohydrate degradation; pentose phosphate pathway; D-glyceraldehyde 3-phosphate and beta-D-fructose 6-phosphate from D-ribose 5-phosphate and D-xylulose 5-phosphate (non-oxidative stage): step 2/3. Its function is as follows. Transaldolase is important for the balance of metabolites in the pentose-phosphate pathway. This chain is Transaldolase, found in Polaromonas naphthalenivorans (strain CJ2).